Here is an 880-residue protein sequence, read N- to C-terminus: Translation initiation factor IF-2 (880 aa).

Disordered stretches follow at residues 51–78 (KQHG…GSTG), 93–116 (YVKR…QAAN), and 142–293 (KEAD…FEKP). Polar residues predominate over residues 69-78 (STLNVKGSTG). Positions 142 to 229 (KEADEKAKKA…ARKKAAEGGD (88 aa)) are enriched in basic and acidic residues. The segment covering 269–279 (GRRTRRGKKQR) has biased composition (basic residues). A tr-type G domain is found at 380-549 (SRAPVVTIMG…LLQAEMLDLS (170 aa)). The segment at 389–396 (GHVDHGKT) is G1. 389-396 (GHVDHGKT) contacts GTP. A G2 region spans residues 414 to 418 (GITQH). Positions 435–438 (DTPG) are G3. GTP contacts are provided by residues 435-439 (DTPGH) and 489-492 (NKID). The G4 stretch occupies residues 489 to 492 (NKID). The G5 stretch occupies residues 525–527 (SAK).

This sequence belongs to the TRAFAC class translation factor GTPase superfamily. Classic translation factor GTPase family. IF-2 subfamily.

It localises to the cytoplasm. One of the essential components for the initiation of protein synthesis. Protects formylmethionyl-tRNA from spontaneous hydrolysis and promotes its binding to the 30S ribosomal subunits. Also involved in the hydrolysis of GTP during the formation of the 70S ribosomal complex. This chain is Translation initiation factor IF-2, found in Psychromonas ingrahamii (strain DSM 17664 / CCUG 51855 / 37).